A 636-amino-acid polypeptide reads, in one-letter code: Transcriptional repressor CTCFL (636 aa).

Disordered stretches follow at residues 17–38 (KEQK…VQRV), 160–195 (ENPE…DKRE), and 222–257 (LEEQ…PQSF). The span at 160–170 (ENPELTPDLDE) shows a compositional bias: acidic residues. The span at 242–251 (AKPKRRRQTK) shows a compositional bias: basic residues. C2H2-type zinc fingers lie at residues 257-279 (FQCD…IKIH), 285-307 (HLCH…VNTH), 313-336 (HKCR…RYKH), 342-364 (FKCS…IRSH), 370-392 (FQCC…MRTH), 398-421 (YECP…AQKH), 428-451 (YECP…RNLH), 458-480 (MKCR…QRTH), 486-508 (FKCK…MRMH), 514-537 (FSCL…RKYH), and 546-572 (HLCL…DPEH). The segment at 562–624 (QRHRKKCDPE…AAGSQSPDHG (63 aa)) is disordered. Basic and acidic residues predominate over residues 568-583 (CDPEHETLAPNKDRRP).

The protein belongs to the CTCF zinc-finger protein family. Interacts with histones, PRMT7 and SETD1A. Interacts (via N-terminus) with BAG6/BAT3. As to expression, testis-specific.

The protein localises to the cytoplasm. Its subcellular location is the nucleus. Functionally, testis-specific DNA binding protein responsible for insulator function, nuclear architecture and transcriptional control, which probably acts by recruiting epigenetic chromatin modifiers. Plays a key role in gene imprinting in male germline, by participating in the establishment of differential methylation at the IGF2/H19 imprinted control region (ICR). Directly binds the unmethylated H19 ICR and recruits the PRMT7 methyltransferase, leading to methylate histone H4 'Arg-3' to form H4R3sme2. This probably leads to recruit de novo DNA methyltransferases at these sites. Seems to act as tumor suppressor. In association with DNMT1 and DNMT3B, involved in activation of BAG1 gene expression by binding to its promoter. Required for dimethylation of H3 lysine 4 (H3K4me2) of MYC and BRCA1 promoters. The protein is Transcriptional repressor CTCFL (Ctcfl) of Mus musculus (Mouse).